Here is a 308-residue protein sequence, read N- to C-terminus: MDLLRSLPLGLYLEQPQTWLHKLDPRVKFIWLMSFLTSYSFANNLWRILLVALLILFTLIARIPRRVWQQQMGWLLTLSFFVLAIAAISPDGLGVDYQSRLPTNPQVLTQSANTNNSATATEQLKSSKSYTYVLFHKGPVKVTRRSLDLAVRISTIIFTVIYSTNLYLLTTAPEEITAGVESLMQPLRRFKIPVTEITLTLTLSLRFIPLVLEEVQNLVRSVMTRAINWKKLGLKGAVKVWMIVAERLLENLLLRASQMASAMMVRGFTSPNEHRVPWHDLRLKLRDWLAIASLTIFWGIRVVFGNQI.

5 helical membrane-spanning segments follow: residues 41–61 (FANN…TLIA), 75–95 (LLTL…GLGV), 153–173 (ISTI…TTAP), 192–212 (IPVT…PLVL), and 288–308 (WLAI…GNQI).

This sequence belongs to the ycf92 family.

The protein resides in the membrane. This Nostoc sp. (strain PCC 7120 / SAG 25.82 / UTEX 2576) protein is Ycf92-like protein.